A 181-amino-acid polypeptide reads, in one-letter code: ATP-dependent protease subunit HslV (181 aa).

Thr7 is a catalytic residue. Na(+) is bound by residues Gly166, Cys169, and Thr172.

This sequence belongs to the peptidase T1B family. HslV subfamily. As to quaternary structure, a double ring-shaped homohexamer of HslV is capped on each side by a ring-shaped HslU homohexamer. The assembly of the HslU/HslV complex is dependent on binding of ATP.

The protein localises to the cytoplasm. The catalysed reaction is ATP-dependent cleavage of peptide bonds with broad specificity.. Allosterically activated by HslU binding. Functionally, protease subunit of a proteasome-like degradation complex believed to be a general protein degrading machinery. This Acidovorax ebreus (strain TPSY) (Diaphorobacter sp. (strain TPSY)) protein is ATP-dependent protease subunit HslV.